A 211-amino-acid polypeptide reads, in one-letter code: Superoxide dismutase [Fe] (211 aa).

Fe cation is bound by residues His-34, His-85, Asp-171, and His-175.

The protein belongs to the iron/manganese superoxide dismutase family. Homotetramer. Fe cation is required as a cofactor.

It is found in the cytoplasm. The catalysed reaction is 2 superoxide + 2 H(+) = H2O2 + O2. Its function is as follows. Destroys superoxide anion radicals which are normally produced within the cells and which are toxic to biological systems. This is Superoxide dismutase [Fe] (sod) from Saccharolobus solfataricus (strain ATCC 35092 / DSM 1617 / JCM 11322 / P2) (Sulfolobus solfataricus).